Here is a 307-residue protein sequence, read N- to C-terminus: Protein phosphatase PTC7 homolog fig (307 aa).

A PPM-type phosphatase domain is found at 41–300 (VQGSSKDQQL…DDITVILASV (260 aa)). Residues Asp-77, Gly-78, and Asp-222 each contribute to the Mn(2+) site.

The protein belongs to the PP2C family. The cofactor is Mg(2+). Mn(2+) is required as a cofactor.

It carries out the reaction O-phospho-L-seryl-[protein] + H2O = L-seryl-[protein] + phosphate. The catalysed reaction is O-phospho-L-threonyl-[protein] + H2O = L-threonyl-[protein] + phosphate. The chain is Protein phosphatase PTC7 homolog fig from Drosophila grimshawi (Hawaiian fruit fly).